The primary structure comprises 341 residues: Anthranilate phosphoribosyltransferase (341 aa).

5-phospho-alpha-D-ribose 1-diphosphate contacts are provided by residues Gly-79, 82-83 (GD), Thr-87, 89-92 (NIST), 107-115 (KHGGRSVSS), and Ser-119. Gly-79 contributes to the anthranilate binding site. Position 91 (Ser-91) interacts with Mg(2+). Arg-165 lines the anthranilate pocket. Positions 224 and 225 each coordinate Mg(2+).

Belongs to the anthranilate phosphoribosyltransferase family. As to quaternary structure, homodimer. Mg(2+) is required as a cofactor.

The enzyme catalyses N-(5-phospho-beta-D-ribosyl)anthranilate + diphosphate = 5-phospho-alpha-D-ribose 1-diphosphate + anthranilate. The protein operates within amino-acid biosynthesis; L-tryptophan biosynthesis; L-tryptophan from chorismate: step 2/5. Its function is as follows. Catalyzes the transfer of the phosphoribosyl group of 5-phosphorylribose-1-pyrophosphate (PRPP) to anthranilate to yield N-(5'-phosphoribosyl)-anthranilate (PRA). The sequence is that of Anthranilate phosphoribosyltransferase from Ruminiclostridium cellulolyticum (strain ATCC 35319 / DSM 5812 / JCM 6584 / H10) (Clostridium cellulolyticum).